The primary structure comprises 312 residues: MANDNGIKHFIDLSTVPATELRAILEDAKARKARLKAGEVERPYAGKVLAMIFEKPSTRTRVSFDVGMRQLGGETIMLTGSEMQLGRSETIADTAKVLSRYVDAIMIRTTAHERMLELAEYATVPVINALTDDTHPCQIMADVLTYEEHRGPIKGKTFAWMGDGNNVLHSLVEAAARFDFNVNIATPKGSEPKSQYIDWARANGAGIMSTTDPEKAASGADCIVTDTWVSMGQEDHARGHNVFIPYQVNANLMAKADPKALFMHCLPAHRGEEVTDEVIDGPQAVVFDEAENRLHAQKAILAWCLQDRGLGA.

Carbamoyl phosphate contacts are provided by residues 57-60 (STRT), Gln-84, Arg-108, and 135-138 (HPCQ). L-ornithine is bound by residues Asn-166, Asp-226, and 230–231 (SM). Carbamoyl phosphate contacts are provided by residues 265-266 (CL) and Arg-293.

This sequence belongs to the aspartate/ornithine carbamoyltransferase superfamily. OTCase family.

It is found in the cytoplasm. The enzyme catalyses carbamoyl phosphate + L-ornithine = L-citrulline + phosphate + H(+). It functions in the pathway amino-acid biosynthesis; L-arginine biosynthesis; L-arginine from L-ornithine and carbamoyl phosphate: step 1/3. Functionally, reversibly catalyzes the transfer of the carbamoyl group from carbamoyl phosphate (CP) to the N(epsilon) atom of ornithine (ORN) to produce L-citrulline. The protein is Ornithine carbamoyltransferase of Brucella ovis (strain ATCC 25840 / 63/290 / NCTC 10512).